The primary structure comprises 336 residues: Dihydroorotate dehydrogenase (quinone) (336 aa).

Residues 62-66 and T86 each bind FMN; that span reads AGLDK. A substrate-binding site is contributed by K66. 111 to 115 contacts substrate; the sequence is NRMGF. Positions 139 and 172 each coordinate FMN. Residue N172 coordinates substrate. The Nucleophile role is filled by S175. Residue N177 participates in substrate binding. 2 residues coordinate FMN: K217 and T245. Residue 246-247 participates in substrate binding; the sequence is NT. FMN is bound by residues G268, G297, and 318–319; that span reads YS.

Belongs to the dihydroorotate dehydrogenase family. Type 2 subfamily. In terms of assembly, monomer. Requires FMN as cofactor.

The protein resides in the cell membrane. It carries out the reaction (S)-dihydroorotate + a quinone = orotate + a quinol. It functions in the pathway pyrimidine metabolism; UMP biosynthesis via de novo pathway; orotate from (S)-dihydroorotate (quinone route): step 1/1. Functionally, catalyzes the conversion of dihydroorotate to orotate with quinone as electron acceptor. The protein is Dihydroorotate dehydrogenase (quinone) of Shigella flexneri serotype 5b (strain 8401).